The chain runs to 263 residues: Ribosomal RNA large subunit methyltransferase E (263 aa).

5 residues coordinate S-adenosyl-L-methionine: G48, W50, D68, D88, and D118. Residue K158 is the Proton acceptor of the active site. Residues 205–263 (PVREGDIVEATIEDIGEEGDGIAKVENFTVFVSGVEDGETVEVRIDDVKPRYAFAEPVE) form the TRAM domain.

The protein belongs to the class I-like SAM-binding methyltransferase superfamily. RNA methyltransferase RlmE family.

It is found in the cytoplasm. The catalysed reaction is uridine(2552) in 23S rRNA + S-adenosyl-L-methionine = 2'-O-methyluridine(2552) in 23S rRNA + S-adenosyl-L-homocysteine + H(+). Specifically methylates the uridine in position 2552 of 23S rRNA at the 2'-O position of the ribose in the fully assembled 50S ribosomal subunit. This chain is Ribosomal RNA large subunit methyltransferase E, found in Haloarcula marismortui (strain ATCC 43049 / DSM 3752 / JCM 8966 / VKM B-1809) (Halobacterium marismortui).